We begin with the raw amino-acid sequence, 210 residues long: 7-cyano-7-deazaguanine synthase 2 (210 aa).

10–20 (HSGGMDSTTCL) serves as a coordination point for ATP. Residues Cys-180, Cys-193, Cys-196, and Cys-199 each contribute to the Zn(2+) site.

The protein belongs to the QueC family. Zn(2+) is required as a cofactor.

It carries out the reaction 7-carboxy-7-deazaguanine + NH4(+) + ATP = 7-cyano-7-deazaguanine + ADP + phosphate + H2O + H(+). It functions in the pathway purine metabolism; 7-cyano-7-deazaguanine biosynthesis. In terms of biological role, catalyzes the ATP-dependent conversion of 7-carboxy-7-deazaguanine (CDG) to 7-cyano-7-deazaguanine (preQ(0)). This chain is 7-cyano-7-deazaguanine synthase 2, found in Rhodopseudomonas palustris (strain HaA2).